The following is a 147-amino-acid chain: Myoglobin (147 aa).

The Globin domain occupies 2–141 (ADFDMVLKCW…IIADMEADYK (140 aa)). His-60 provides a ligand contact to nitrite. His-60 contributes to the O2 binding site. His-89 is a binding site for heme b.

This sequence belongs to the globin family. As to quaternary structure, monomeric.

The protein resides in the cytoplasm. Its subcellular location is the sarcoplasm. It carries out the reaction Fe(III)-heme b-[protein] + nitric oxide + H2O = Fe(II)-heme b-[protein] + nitrite + 2 H(+). The catalysed reaction is H2O2 + AH2 = A + 2 H2O. In terms of biological role, monomeric heme protein which primary function is to store oxygen and facilitate its diffusion within muscle tissues. Reversibly binds oxygen through a pentacoordinated heme iron and enables its timely and efficient release as needed during periods of heightened demand. Depending on the oxidative conditions of tissues and cells, and in addition to its ability to bind oxygen, it also has a nitrite reductase activity whereby it regulates the production of bioactive nitric oxide. Under stress conditions, like hypoxia and anoxia, it also protects cells against reactive oxygen species thanks to its pseudoperoxidase activity. This is Myoglobin (mb) from Gobionotothen gibberifrons (Humped rockcod).